Here is a 476-residue protein sequence, read N- to C-terminus: CDK5 and ABL1 enzyme substrate 2 (476 aa).

The segment at Met1–Arg119 is disordered. Residues Pro30 to Gln40 are compositionally biased toward basic residues. Over residues Pro65–Pro96 the composition is skewed to pro residues. 2 positions are modified to phosphoserine: Ser128 and Ser206. A disordered region spans residues Asp256–Gly295. The segment covering Gln263 to Pro272 has biased composition (pro residues).

Belongs to the cyclin family. Binds to CDK3, CDK5 and ABL1. The C-terminal cyclin-box-like region binds to CDK5. Widely expressed.

Its function is as follows. Unknown. Probably involved in G1-S cell cycle transition. This chain is CDK5 and ABL1 enzyme substrate 2 (Cables2), found in Mus musculus (Mouse).